A 568-amino-acid chain; its full sequence is Putative ABC transporter ATP-binding protein EF_2153 (568 aa).

ABC transporter domains are found at residues 6–247 (ITFN…GIRE) and 301–535 (LRLE…ASLK). ATP is bound by residues 40 to 47 (GPSGSGKS) and 335 to 342 (GKNGAGKS).

Belongs to the ABC transporter superfamily.

It localises to the cell membrane. In terms of biological role, probably part of an ABC transporter complex. Responsible for energy coupling to the transport system. The sequence is that of Putative ABC transporter ATP-binding protein EF_2153 from Enterococcus faecalis (strain ATCC 700802 / V583).